The primary structure comprises 249 residues: AA9 family lytic polysaccharide monooxygenase A (249 aa).

Positions 1–19 are cleaved as a signal peptide; that stretch reads MRGPLCFTLIAIAVTSVVA. Residues histidine 20 and histidine 97 each contribute to the Cu(2+) site. Cysteine 60 and cysteine 183 are joined by a disulfide. Histidine 163 serves as a coordination point for O2. Tyrosine 180 is a binding site for Cu(2+).

The protein belongs to the polysaccharide monooxygenase AA9 family. Requires Cu(2+) as cofactor.

It is found in the secreted. The enzyme catalyses [(1-&gt;4)-beta-D-glucosyl]n+m + reduced acceptor + O2 = 4-dehydro-beta-D-glucosyl-[(1-&gt;4)-beta-D-glucosyl]n-1 + [(1-&gt;4)-beta-D-glucosyl]m + acceptor + H2O.. Functionally, lytic polysaccharide monooxygenase (LPMO) that depolymerizes crystalline and amorphous polysaccharides via the oxidation of scissile alpha- or beta-(1-4)-glycosidic bonds, yielding C4 oxidation products. Catalysis by LPMOs requires the reduction of the active-site copper from Cu(II) to Cu(I) by a reducing agent and H(2)O(2) or O(2) as a cosubstrate. Active on cellulose and cello-oligosaccharides, as well as plant cell wall-derived hemicellulosic polysaccharides. Also active on cello-oligosaccharides such as cellohexaose, cellopentaose or cellotetraose. This chain is AA9 family lytic polysaccharide monooxygenase A, found in Armillaria gallica (Bulbous honey fungus).